Here is a 182-residue protein sequence, read N- to C-terminus: Protein SYM1 (182 aa).

3 helical membrane-spanning segments follow: residues 51 to 70 (TLRPFLYGAVLFSLVGDKWY), 98 to 118 (LIFAPIGVPLYYTAMALMEGG), and 135 to 155 (LLANWIVWPAFQLCNFSLVPV).

It belongs to the peroxisomal membrane protein PXMP2/4 family.

It localises to the mitochondrion inner membrane. Functionally, may be involved in cellular response to stress. Required to maintain mitochondrial DNA (mtDNA) integrity and stability. This is Protein SYM1 (SYM1) from Eremothecium gossypii (strain ATCC 10895 / CBS 109.51 / FGSC 9923 / NRRL Y-1056) (Yeast).